The following is a 1091-amino-acid chain: ATP-citrate synthase (1091 aa).

Residues 4-265 form the ATP-grasp domain; that stretch reads KAISEQTGKE…LDAKSGASLK (262 aa). Lys58, Arg66, Gly67, Pro109, Val111, and Glu118 together coordinate ATP. At Tyr131 the chain carries Phosphotyrosine. An ATP-binding site is contributed by Asp216. Positions 257, 260, and 262 each coordinate Mg(2+). Ser263 carries the phosphoserine modification. Citrate-binding residues include Gly309, Asn346, Thr348, Tyr364, and Arg379. Residues 442–457 are compositionally biased toward low complexity; the sequence is SGSTSTPAPSRTASFS. A disordered region spans residues 442 to 478; sequence SGSTSTPAPSRTASFSESRADEVAPAKKAKPAMPQGK. Thr447 carries the post-translational modification Phosphothreonine. The residue at position 451 (Ser451) is a Phosphoserine. Ser455 carries the phosphoserine; by PKA and PKB/AKT1 or PKB/AKT2 or BCKDK modification. The residue at position 459 (Ser459) is a Phosphoserine. N6-acetyllysine; alternate occurs at positions 530, 536, and 544. Residues Lys530, Lys536, and Lys544 each participate in a glycyl lysine isopeptide (Lys-Gly) (interchain with G-Cter in ubiquitin); alternate cross-link. At Thr629 the chain carries Phosphothreonine. The residue at position 653 (Ser653) is a Phosphoserine. Tyr672 bears the Phosphotyrosine mark. The active-site Tele-phosphohistidine intermediate is His750. 769–779 provides a ligand contact to CoA; that stretch reads LKEAGVFVPRS. Ser829 is subject to Phosphoserine. Lys938, Lys958, Lys968, and Lys1067 each carry N6-acetyllysine. Ser1090 carries the phosphoserine modification.

It in the N-terminal section; belongs to the succinate/malate CoA ligase beta subunit family. This sequence in the C-terminal section; belongs to the succinate/malate CoA ligase alpha subunit family. In terms of assembly, homotetramer. It depends on Mg(2+) as a cofactor. In terms of processing, phosphorylated by PKA and GSK3 in a sequential manner; phosphorylation results in activation of its activity. Phosphorylation on Thr-447 and Ser-451 depends on the phosphorylation state of Ser-455. Phosphorylation on Ser-455 is decreased by prior phosphorylation on the other 2 residues. Phosphorylated at Ser-455 by BCKDK and dephosphorylated by protein phosphatase PPM1K. ISGylated. Post-translationally, acetylated at Lys-530, Lys-536 and Lys-544 by KAT2B/PCAF. Acetylation is promoted by glucose and stabilizes the protein, probably by preventing ubiquitination at the same sites. Acetylation promotes de novo lipid synthesis. Deacetylated by SIRT2. In terms of processing, ubiquitinated at Lys-530, Lys-536 and Lys-544 by the BCR(KLHL25) E3 ubiquitin ligase complex and UBR4, leading to its degradation. Ubiquitination is probably inhibited by acetylation at same site. BCR(KLHL25)-mediated degradation of ACLY promotes fatty acid oxidation and is required for differentiation of inducible regulatory T (iTreg) cells.

It is found in the cytoplasm. Its subcellular location is the cytosol. The enzyme catalyses oxaloacetate + acetyl-CoA + ADP + phosphate = citrate + ATP + CoA. Its activity is regulated as follows. Phosphorylation results in activation of its activity. Glucose 6-phosphate, fructose 6-phosphate, fructose 2,6-bisphosphate, ribulose 5-phosphate, and fructose 1,6-bisphosphate also act as activators. Functionally, catalyzes the cleavage of citrate into oxaloacetate and acetyl-CoA, the latter serving as common substrate in multiple biochemical reactions in protein, carbohydrate and lipid metabolism. This is ATP-citrate synthase (Acly) from Mus musculus (Mouse).